The sequence spans 246 residues: Phosphomannomutase (246 aa).

The active-site Nucleophile is the Asp13. Residues Asp13 and Asp15 each contribute to the Mg(2+) site. Asp15 acts as the Proton donor/acceptor in catalysis. Arg22, Arg124, Arg135, Arg142, Ser180, and Asp182 together coordinate alpha-D-mannose 1-phosphate. Residues Asp208, Tyr220, and Thr225 each contribute to the Mg(2+) site.

This sequence belongs to the eukaryotic PMM family. In terms of assembly, homodimer. Mg(2+) is required as a cofactor. As to expression, expressed in roots, stems, leaves, flowers and immature fruits.

It is found in the cytoplasm. It catalyses the reaction alpha-D-mannose 1-phosphate = D-mannose 6-phosphate. Its pathway is nucleotide-sugar biosynthesis; GDP-alpha-D-mannose biosynthesis; alpha-D-mannose 1-phosphate from D-fructose 6-phosphate: step 2/2. Functionally, catalyzes the interconversion of mannose-6-phosphate to mannose-1-phosphate, the precursor for the synthesis of GDP-mannose. GDP-mannose is an essential sugar nucleotide for the synthesis of D-mannose-containing cell wall polysaccharides (galactomannans and glucomannans), glycolipids, glycoproteins and the antioxidant L-ascorbate. Can complement the yeast temperature-sensitive mutant sec53-6. The sequence is that of Phosphomannomutase from Arabidopsis thaliana (Mouse-ear cress).